A 335-amino-acid chain; its full sequence is Cholinephosphotransferase 1 (335 aa).

2 consecutive transmembrane segments (helical) span residues 53–73 and 84–108; these read PNAI…PLIA and FWAY…GKQA. A CDP-choline-binding site is contributed by N54. Mg(2+)-binding residues include D101 and D104. R109 serves as a coordination point for CDP-choline. The next 6 membrane-spanning stretches (helical) occupy residues 116–140, 151–169, 181–197, 213–238, 267–276, and 284–313; these read PLGE…SCIA, FFCC…WQTY, VTEV…VSAF, ELKF…RIIF, IGPGLLFLDQ, and EYVV…IAAH. D122 is a binding site for Mg(2+). Catalysis depends on H123, which acts as the Proton acceptor. D126 is a binding site for Mg(2+).

Belongs to the CDP-alcohol phosphatidyltransferase class-I family. The cofactor is Mg(2+). Requires Mn(2+) as cofactor.

The protein resides in the golgi apparatus membrane. It catalyses the reaction CDP-choline + a 1,2-diacyl-sn-glycerol = a 1,2-diacyl-sn-glycero-3-phosphocholine + CMP + H(+). It carries out the reaction 1-octadecanoyl-2-(5Z,8Z,11Z,14Z-eicosatetraenoyl)-sn-glycerol + CDP-choline = 1-octadecanoyl-2-(5Z,8Z,11Z,14Z-eicosatetraenoyl)-sn-glycero-3-phosphocholine + CMP + H(+). The catalysed reaction is 1-hexadecanoyl-2-(9Z-octadecenoyl)-sn-glycerol + CDP-choline = 1-hexadecanoyl-2-(9Z-octadecenoyl)-sn-glycero-3-phosphocholine + CMP + H(+). The enzyme catalyses 1-hexadecanoyl-2-(4Z,7Z,10Z,13Z,16Z,19Z-docosahexaenoyl)-sn-glycerol + CDP-choline = 1-hexadecanoyl-2-(4Z,7Z,10Z,13Z,16Z,19Z-docosahexaenoyl)-sn-glycero-3-phosphocholine + CMP + H(+). It catalyses the reaction 1,2-dioctanoyl-sn-glycerol + CDP-choline = 1,2-dioctanoyl-sn-glycero-3-phosphocholine + CMP + H(+). Its pathway is phospholipid metabolism; phosphatidylcholine biosynthesis; phosphatidylcholine from phosphocholine: step 2/2. Functionally, catalyzes the final step of de novo phosphatidylcholine (PC) synthesis, i.e. the transfer of choline phosphate from CDP-choline to the free hydroxyl of a diacylglycerol (DAG), producing a PC. It thereby plays a central role in the formation and maintenance of vesicular membranes. This Gallus gallus (Chicken) protein is Cholinephosphotransferase 1 (CHPT1).